Consider the following 266-residue polypeptide: 4-hydroxy-tetrahydrodipicolinate reductase (266 aa).

G10–M15 contacts NAD(+). Residue K38 coordinates NADP(+). NAD(+)-binding positions include G99–T101 and A125–F128. H155 functions as the Proton donor/acceptor in the catalytic mechanism. (S)-2,3,4,5-tetrahydrodipicolinate is bound at residue H156. The active-site Proton donor is K159. G165–T166 contributes to the (S)-2,3,4,5-tetrahydrodipicolinate binding site.

The protein belongs to the DapB family.

Its subcellular location is the cytoplasm. It catalyses the reaction (S)-2,3,4,5-tetrahydrodipicolinate + NAD(+) + H2O = (2S,4S)-4-hydroxy-2,3,4,5-tetrahydrodipicolinate + NADH + H(+). It carries out the reaction (S)-2,3,4,5-tetrahydrodipicolinate + NADP(+) + H2O = (2S,4S)-4-hydroxy-2,3,4,5-tetrahydrodipicolinate + NADPH + H(+). Its pathway is amino-acid biosynthesis; L-lysine biosynthesis via DAP pathway; (S)-tetrahydrodipicolinate from L-aspartate: step 4/4. Its function is as follows. Catalyzes the conversion of 4-hydroxy-tetrahydrodipicolinate (HTPA) to tetrahydrodipicolinate. The sequence is that of 4-hydroxy-tetrahydrodipicolinate reductase from Bacillus thuringiensis subsp. konkukian (strain 97-27).